The sequence spans 435 residues: Temperature-sensitive sn-2 acyl-lipid omega-3 desaturase (ferredoxin), chloroplastic (435 aa).

A chloroplast-targeting transit peptide spans 1 to 42 (MASSVLSECGFRPLPRFYPKHTTSFASNPKPTFKFNPPLKPP). The next 2 helical transmembrane spans lie at 111–131 (MSYVVRDVAIVFGLAAVAAYF) and 134–154 (WLLWPLYWFAQGTMFWALFVL). Positions 156 to 160 (HDCGH) match the Histidine box-1 motif. Residues 192–196 (HRTHH) carry the Histidine box-2 motif. 2 helical membrane-spanning segments follow: residues 268-290 (VLTSTACWTAMAALLVCLNFVMG) and 297-319 (LYGIPYWIFVMWLDFVTYLHHHG). Residues 359-363 (HVIHH) carry the Histidine box-3 motif.

This sequence belongs to the fatty acid desaturase type 1 family.

The protein localises to the plastid. It localises to the chloroplast membrane. The catalysed reaction is a (7Z,10Z)-hexadecadienoyl-containing glycerolipid + 2 reduced [2Fe-2S]-[ferredoxin] + O2 + 2 H(+) = a (7Z,10Z,13Z)-hexadecatrienoyl-containing glycerolipid + 2 oxidized [2Fe-2S]-[ferredoxin] + 2 H2O. The enzyme catalyses a (9Z,12Z)-octadecadienoyl-containing glycerolipid + 2 reduced [2Fe-2S]-[ferredoxin] + O2 + 2 H(+) = (9Z,12Z,15Z)-octadecatrienoyl-containing glycerolipid + 2 oxidized [2Fe-2S]-[ferredoxin] + 2 H2O. Its pathway is lipid metabolism; polyunsaturated fatty acid biosynthesis. Its function is as follows. Chloroplast omega-3 fatty acid desaturase introduces the third double bond in the biosynthesis of 16:3 and 18:3 fatty acids, important constituents of plant membranes. It is thought to use ferredoxin as an electron donor and to act on fatty acids esterified to galactolipids, sulfolipids and phosphatidylglycerol. The sequence is that of Temperature-sensitive sn-2 acyl-lipid omega-3 desaturase (ferredoxin), chloroplastic from Arabidopsis thaliana (Mouse-ear cress).